The following is a 121-amino-acid chain: MAFDKDAIIASLKEASISDLNDLVKAIEEEFDVSAAAPVAVAGAAGGDAAAKDSFTVELTEPGSAKVKVIKAVKDITGLGLKDAKDLVDGAPSAIKEDVKEDEANDIKEKLEAAGATVTLK.

Belongs to the bacterial ribosomal protein bL12 family. As to quaternary structure, homodimer. Part of the ribosomal stalk of the 50S ribosomal subunit. Forms a multimeric L10(L12)X complex, where L10 forms an elongated spine to which 2 to 4 L12 dimers bind in a sequential fashion. Binds GTP-bound translation factors.

Its function is as follows. Forms part of the ribosomal stalk which helps the ribosome interact with GTP-bound translation factors. Is thus essential for accurate translation. The protein is Large ribosomal subunit protein bL12 of Limosilactobacillus reuteri (strain DSM 20016) (Lactobacillus reuteri).